The primary structure comprises 212 residues: Thymidylate kinase (212 aa).

9–16 is a binding site for ATP; sequence GIDGCGKT.

It belongs to the thymidylate kinase family.

It carries out the reaction dTMP + ATP = dTDP + ADP. Functionally, phosphorylation of dTMP to form dTDP in both de novo and salvage pathways of dTTP synthesis. In Synechococcus sp. (strain CC9311), this protein is Thymidylate kinase.